The sequence spans 317 residues: Methionyl-tRNA formyltransferase (317 aa).

117–120 lines the (6S)-5,6,7,8-tetrahydrofolate pocket; the sequence is SLLP.

Belongs to the Fmt family.

It carries out the reaction L-methionyl-tRNA(fMet) + (6R)-10-formyltetrahydrofolate = N-formyl-L-methionyl-tRNA(fMet) + (6S)-5,6,7,8-tetrahydrofolate + H(+). In terms of biological role, attaches a formyl group to the free amino group of methionyl-tRNA(fMet). The formyl group appears to play a dual role in the initiator identity of N-formylmethionyl-tRNA by promoting its recognition by IF2 and preventing the misappropriation of this tRNA by the elongation apparatus. The sequence is that of Methionyl-tRNA formyltransferase from Herminiimonas arsenicoxydans.